A 360-amino-acid polypeptide reads, in one-letter code: MTATLILLLLAQVSWAGPFQQRGLFDFMLEDEASGIGPDERAPELPDLDMLGPVCPFRCQCHLRVVQCSDLGLDKVPKDLPPDTTLLDLQNNKITEIKDGDFKNLKNLHALILVNNKISKISPGAFTPLVKLERLYLSKNHLKELPEKMPKSLQELRAHENEITKVRKSVFSGMNQMIVIELGTNPLKSSGIENGAFQGMKKLSYIRIADTNITTIPQGLPPSLTELHLDGNKITKIDASSLKGLNNLAKLGLSFNDISAVDNGSLANAPHLRELHLDNNKLIRVPGGLADHKYIQVVYLHNNNISVVGANDFCPPGYNTKKASYSGVSLFSNPVQYWEIQPSTFRCVYMRSAIQLGNYK.

A signal peptide spans 1 to 16; it reads MTATLILLLLAQVSWA. Positions 17-30 are excised as a propeptide; the sequence is GPFQQRGLFDFMLE. A glycan (O-linked (Xyl...) (glycosaminoglycan) serine) is linked at S34. 2 cysteine pairs are disulfide-bonded: C55/C61 and C59/C68. 12 LRR repeats span residues 74-94, 95-118, 119-142, 143-163, 164-187, 188-213, 214-234, 235-258, 259-282, 283-305, 306-335, and 336-360; these read DKVP…NNKI, TEIK…NNKI, SKIS…KNHL, KELP…ENEI, TKVR…TNPL, KSSG…DTNI, TTIP…GNKI, TKID…FNDI, SAVD…NNKL, IRVP…NNNI, SVVG…SNPV, and QYWE…GNYK. N212 carries N-linked (GlcNAc...) asparagine glycosylation. N-linked (GlcNAc...) asparagine glycosylation is found at N263 and N304. C314 and C347 are oxidised to a cystine.

This sequence belongs to the small leucine-rich proteoglycan (SLRP) family. SLRP class I subfamily. As to quaternary structure, binds to type I and type II collagen, fibronectin and TGF-beta. Forms a ternary complex with MFAP2 and ELN. Interacts with DPT. In terms of processing, the attached glycosaminoglycan chain can be either chondroitin sulfate or dermatan sulfate depending upon the tissue of origin.

The protein resides in the secreted. Its subcellular location is the extracellular space. The protein localises to the extracellular matrix. May affect the rate of fibrils formation. The polypeptide is Decorin (DCN) (Oryctolagus cuniculus (Rabbit)).